Consider the following 322-residue polypeptide: CXXC-type zinc finger protein 5 (322 aa).

The span at 1–10 (MSSLGGGSQD) shows a compositional bias: gly residues. The disordered stretch occupies residues 1–100 (MSSLGGGSQD…SGGGSMMGGE (100 aa)). 2 stretches are compositionally biased toward low complexity: residues 11–20 (AGGSSSSSTN) and 28–52 (SGPK…VADD). Threonine 53 carries the phosphothreonine modification. Residues 87-97 (SSGGSGGGSMM) show a composition bias toward gly residues. The CXXC-type zinc finger occupies 256-297 (GKKKRKRCGMCAPCRRRINCEQCSSCRNRKTGHQICKFRKCE). Residues 257 to 262 (KKKRKR) carry the Nuclear localization signal motif. Zn(2+) contacts are provided by cysteine 263, cysteine 266, cysteine 269, cysteine 275, cysteine 278, cysteine 281, cysteine 291, and cysteine 296.

As to quaternary structure, interacts with DVL1. Interacts with RBPJ.

It is found in the nucleus. The protein resides in the cytoplasm. Its function is as follows. May indirectly participate in activation of the NF-kappa-B and MAPK pathways. Acts as a mediator of BMP4-mediated modulation of canonical Wnt signaling activity in neural stem cells. Required for DNA damage-induced ATM phosphorylation, p53 activation and cell cycle arrest. Involved in myelopoiesis. Transcription factor. Binds to the oxygen responsive element of COX4I2 and represses its transcription under hypoxia conditions (4% oxygen), as well as normoxia conditions (20% oxygen). May repress COX4I2 transactivation induced by CHCHD2 and RBPJ. Binds preferentially to DNA containing cytidine-phosphate-guanosine (CpG) dinucleotides over CpH (H=A, T, and C), hemimethylated-CpG and hemimethylated-hydroxymethyl-CpG. This is CXXC-type zinc finger protein 5 (CXXC5) from Homo sapiens (Human).